The sequence spans 70 residues: Cecropin-P1 (70 aa).

Positions 1 to 13 (MFLIYLFVQTAES) are cleaved as a signal peptide. A propeptide spans 45–70 (RRRFVAEQDAIHSRVSREVPTLSDSV) (removed in mature form).

In terms of tissue distribution, expressed in the body wall, intestine, uterus and ovary.

Its subcellular location is the secreted. Functionally, has antibacterial activity against several Gram-positive and Gram-negative bacteria. Is weakly active against yeasts. Acts by a nonpore mechanism. The chain is Cecropin-P1 (ASCEC-1) from Ascaris suum (Pig roundworm).